Here is a 181-residue protein sequence, read N- to C-terminus: UPF0232 protein MAP_0004 (181 aa).

The segment covering 1–11 (MSDDQSPSPSG) has biased composition (polar residues). Disordered regions lie at residues 1–70 (MSDD…PQPL) and 161–181 (APSWRKGPRHIAGRGPRDTYG). A compositionally biased stretch (basic and acidic residues) spans 18–39 (LVRRTLEEARAAARAQGKDAGR). Low complexity predominate over residues 40–50 (GRAAAPTPRRV).

It belongs to the UPF0232 family.

The polypeptide is UPF0232 protein MAP_0004 (Mycolicibacterium paratuberculosis (strain ATCC BAA-968 / K-10) (Mycobacterium paratuberculosis)).